A 75-amino-acid polypeptide reads, in one-letter code: Small ribosomal subunit protein bS18 (75 aa).

It belongs to the bacterial ribosomal protein bS18 family. As to quaternary structure, part of the 30S ribosomal subunit. Forms a tight heterodimer with protein bS6.

Its function is as follows. Binds as a heterodimer with protein bS6 to the central domain of the 16S rRNA, where it helps stabilize the platform of the 30S subunit. The chain is Small ribosomal subunit protein bS18 from Paracoccus denitrificans (strain Pd 1222).